Here is a 124-residue protein sequence, read N- to C-terminus: Vicilin, 14 kDa component (124 aa).

The segment at 23–57 is disordered; the sequence is LSKNAKSSSRRSVSSESGPFNLRSEDPLYSNNSGK. Residue asparagine 53 is glycosylated (N-linked (GlcNAc...) asparagine).

This sequence belongs to the 7S seed storage protein family.

The protein localises to the vacuole. Its subcellular location is the aleurone grain. Functionally, seed storage protein. This chain is Vicilin, 14 kDa component, found in Pisum sativum (Garden pea).